The following is a 177-amino-acid chain: Large ribosomal subunit protein uL6 (177 aa).

This sequence belongs to the universal ribosomal protein uL6 family. As to quaternary structure, part of the 50S ribosomal subunit.

In terms of biological role, this protein binds to the 23S rRNA, and is important in its secondary structure. It is located near the subunit interface in the base of the L7/L12 stalk, and near the tRNA binding site of the peptidyltransferase center. The polypeptide is Large ribosomal subunit protein uL6 (Neisseria meningitidis serogroup C (strain 053442)).